Consider the following 660-residue polypeptide: Probable serine/threonine-protein kinase CE0033 (660 aa).

The Protein kinase domain occupies 9–278 (YELGASIGSG…AEMAADLELL (270 aa)). Residues 15 to 23 (IGSGGMSEV) and Lys-38 contribute to the ATP site. The active-site Proton acceptor is Asp-136. A disordered region spans residues 288–319 (RAHVEKPDEPETVVVPQRLSTPPPPPTPAMPA). 3 PASTA domains span residues 377–443 (SAST…TISS), 444–512 (GREV…TVST), and 513–577 (GPSL…EISN).

Belongs to the protein kinase superfamily. Ser/Thr protein kinase family.

It carries out the reaction L-seryl-[protein] + ATP = O-phospho-L-seryl-[protein] + ADP + H(+). The catalysed reaction is L-threonyl-[protein] + ATP = O-phospho-L-threonyl-[protein] + ADP + H(+). The chain is Probable serine/threonine-protein kinase CE0033 from Corynebacterium efficiens (strain DSM 44549 / YS-314 / AJ 12310 / JCM 11189 / NBRC 100395).